The primary structure comprises 553 residues: Glucose-6-phosphate isomerase (553 aa).

D-glucose 6-phosphate contacts are provided by residues 164-165, 215-220, glutamine 359, glutamate 363, histidine 394, and lysine 516; these read GS and SKTFTT. The active-site Proton donor is the glutamate 363. Catalysis depends on residues histidine 394 and lysine 516.

The protein belongs to the GPI family. Homodimer.

It is found in the cytoplasm. It localises to the cytosol. The enzyme catalyses alpha-D-glucose 6-phosphate = beta-D-fructose 6-phosphate. The protein operates within carbohydrate degradation; glycolysis; D-glyceraldehyde 3-phosphate and glycerone phosphate from D-glucose: step 2/4. In terms of biological role, in the cytoplasm, catalyzes the conversion of glucose-6-phosphate to fructose-6-phosphate, the second step in glycolysis, and the reverse reaction during gluconeogenesis. This Aspergillus oryzae (strain ATCC 42149 / RIB 40) (Yellow koji mold) protein is Glucose-6-phosphate isomerase (pgiA).